Reading from the N-terminus, the 332-residue chain is Inositol 2-dehydrogenase 2 (332 aa).

This sequence belongs to the Gfo/Idh/MocA family. As to quaternary structure, homotetramer.

It carries out the reaction myo-inositol + NAD(+) = scyllo-inosose + NADH + H(+). In terms of biological role, involved in the oxidation of myo-inositol (MI) to 2-keto-myo-inositol (2KMI or 2-inosose). This Paenarthrobacter aurescens (strain TC1) protein is Inositol 2-dehydrogenase 2.